A 277-amino-acid chain; its full sequence is Orotidine 5'-phosphate decarboxylase (277 aa).

Substrate contacts are provided by residues Asp40, Lys62 to His64, Asp93 to Thr102, Tyr229, and Arg247. Lys95 acts as the Proton donor in catalysis.

Belongs to the OMP decarboxylase family.

It carries out the reaction orotidine 5'-phosphate + H(+) = UMP + CO2. It functions in the pathway pyrimidine metabolism; UMP biosynthesis via de novo pathway; UMP from orotate: step 2/2. This chain is Orotidine 5'-phosphate decarboxylase (pyrG), found in Aspergillus kawachii (White koji mold).